The sequence spans 293 residues: Pyridoxal 5'-phosphate synthase subunit PdxS (293 aa).

D23 lines the D-ribose 5-phosphate pocket. Residue K80 is the Schiff-base intermediate with D-ribose 5-phosphate of the active site. G152 contributes to the D-ribose 5-phosphate binding site. R164 lines the D-glyceraldehyde 3-phosphate pocket. D-ribose 5-phosphate contacts are provided by residues G213 and 234–235 (GS).

It belongs to the PdxS/SNZ family. In terms of assembly, in the presence of PdxT, forms a dodecamer of heterodimers.

The catalysed reaction is aldehydo-D-ribose 5-phosphate + D-glyceraldehyde 3-phosphate + L-glutamine = pyridoxal 5'-phosphate + L-glutamate + phosphate + 3 H2O + H(+). Its pathway is cofactor biosynthesis; pyridoxal 5'-phosphate biosynthesis. Its function is as follows. Catalyzes the formation of pyridoxal 5'-phosphate from ribose 5-phosphate (RBP), glyceraldehyde 3-phosphate (G3P) and ammonia. The ammonia is provided by the PdxT subunit. Can also use ribulose 5-phosphate and dihydroxyacetone phosphate as substrates, resulting from enzyme-catalyzed isomerization of RBP and G3P, respectively. The chain is Pyridoxal 5'-phosphate synthase subunit PdxS from Syntrophus aciditrophicus (strain SB).